A 132-amino-acid polypeptide reads, in one-letter code: HLA class I histocompatibility antigen protein P5 (132 aa).

In terms of tissue distribution, expressed in lymphoid tissues; Detected in spleen as well as in B-cell lines, NK cell lines and activated lymphocytes.

The sequence is that of HLA class I histocompatibility antigen protein P5 (HCP5) from Homo sapiens (Human).